The chain runs to 382 residues: Opsin Rh5 (382 aa).

The Extracellular segment spans residues 1–49; that stretch reads MHINGPSGPQAYVNDSLGDGSVFPMGHGYPAEYQHMVHAHWRGFREAPI. Asn14 carries N-linked (GlcNAc...) asparagine glycosylation. Residues 50-76 traverse the membrane as a helical segment; that stretch reads YYHAGFYIAFIVLMLSSIFGNGLVIWI. At 77–88 the chain is on the cytoplasmic side; that stretch reads FSTSKSLRTPSN. A helical transmembrane segment spans residues 89–112; that stretch reads LLILNLAIFDLFMCTNMPHYLINA. The Extracellular segment spans residues 113–127; the sequence is TVGYIVGGDLGCDIY. Cys124 and Cys201 are joined by a disulfide. The chain crosses the membrane as a helical span at residues 128–147; it reads ALNGGISGMGASITNAFIAF. Residues 148–165 lie on the Cytoplasmic side of the membrane; sequence DRYKTISNPIDGRLSYGQ. A helical membrane pass occupies residues 166–190; the sequence is IVLLILFTWLWATPFSVLPLFQIWG. The Extracellular portion of the chain corresponds to 191-214; the sequence is RYQPEGFLTTCSFDYLTNTDENRL. Residues 215 to 242 traverse the membrane as a helical segment; sequence FVRTIFVWSYVIPMTMILVSYYKLFTHV. Topologically, residues 243 to 278 are cytoplasmic; the sequence is RVHEKMLAEQAKKMNVKSLSANANADNMSVELRIAK. A helical membrane pass occupies residues 279 to 302; that stretch reads AALIIYMLFILAWTPYSVVALIGC. Residues 303–310 lie on the Extracellular side of the membrane; sequence FGEQQLIT. The helical transmembrane segment at 311–335 threads the bilayer; that stretch reads PFVSMLPCLACKSVSCLDPWVYATS. Lys322 is subject to N6-(retinylidene)lysine. Residues 336-382 lie on the Cytoplasmic side of the membrane; it reads HPKYRLELERRLPWLGIREKHATSGTSGGQESVASVSGDTLALSVQN. Residues 357–382 form a disordered region; that stretch reads ATSGTSGGQESVASVSGDTLALSVQN. Residues 358 to 382 are compositionally biased toward polar residues; that stretch reads TSGTSGGQESVASVSGDTLALSVQN.

It belongs to the G-protein coupled receptor 1 family. Opsin subfamily. Post-translationally, phosphorylated on some or all of the serine and threonine residues present in the C-terminal region. In terms of tissue distribution, expressed specifically in the retina. Each Drosophila eye is composed of 800 facets or ommatidia. Each ommatidium contains 8 photoreceptor cells (R1-R8), the R1 to R6 cells are outer cells, while R7 and R8 are inner cells. Rh5 is expressed only in R8 photoreceptor cells in a subset of ommatidia.

It localises to the cell projection. The protein resides in the rhabdomere membrane. Visual pigments are the light-absorbing molecules that mediate vision. They consist of an apoprotein, opsin, covalently linked to cis-retinal. This chain is Opsin Rh5 (Rh5), found in Drosophila melanogaster (Fruit fly).